The following is a 508-amino-acid chain: Maturase K (508 aa).

It belongs to the intron maturase 2 family. MatK subfamily.

Its subcellular location is the plastid. The protein resides in the chloroplast. Its function is as follows. Usually encoded in the trnK tRNA gene intron. Probably assists in splicing its own and other chloroplast group II introns. The sequence is that of Maturase K from Ranunculus lingua (Greater spearwort).